The chain runs to 87 residues: Large ribosomal subunit protein bL31B-2/bL31B-3 (87 aa).

The protein belongs to the bacterial ribosomal protein bL31 family. Type B subfamily. As to quaternary structure, part of the 50S ribosomal subunit.

The polypeptide is Large ribosomal subunit protein bL31B-2/bL31B-3 (rpmE2-2) (Escherichia coli O157:H7).